We begin with the raw amino-acid sequence, 179 residues long: ATP-dependent protease subunit HslV (179 aa).

Threonine 6 is a catalytic residue. Serine 164, cysteine 167, and threonine 170 together coordinate Na(+).

It belongs to the peptidase T1B family. HslV subfamily. A double ring-shaped homohexamer of HslV is capped on each side by a ring-shaped HslU homohexamer. The assembly of the HslU/HslV complex is dependent on binding of ATP.

Its subcellular location is the cytoplasm. It carries out the reaction ATP-dependent cleavage of peptide bonds with broad specificity.. Its activity is regulated as follows. Allosterically activated by HslU binding. Protease subunit of a proteasome-like degradation complex believed to be a general protein degrading machinery. The protein is ATP-dependent protease subunit HslV of Listeria innocua serovar 6a (strain ATCC BAA-680 / CLIP 11262).